A 117-amino-acid chain; its full sequence is MQRCAGFLFLSLILCAALSETFGLVLSAKEKRGWTLNSAGYLLGPHAVDNHRSFNDKHGFTGKREIQPEEDIKAGNIGRPLADENIVRTVVEFLTYLHLKEAGALDNLPSPEETNES.

The first 19 residues, 1–19 (MQRCAGFLFLSLILCAALS), serve as a signal peptide directing secretion. Residues 20–30 (ETFGLVLSAKE) constitute a propeptide that is removed on maturation. Residue T61 is modified to Threonine amide.

It belongs to the galanin family.

Its subcellular location is the secreted. Its function is as follows. Endocrine hormone of the central and peripheral nervous systems that binds and activates the G protein-coupled receptors GALR1, GALR2, and GALR3. This small neuropeptide may regulate diverse physiologic functions including contraction of smooth muscle of the gastrointestinal and genitourinary tract, growth hormone and insulin release and adrenal secretion. The chain is Galanin peptides (GAL) from Coturnix japonica (Japanese quail).